Here is a 288-residue protein sequence, read N- to C-terminus: Energy-coupling factor transporter ATP-binding protein EcfA2 (288 aa).

One can recognise an ABC transporter domain in the interval 2–244 (IKFEKVNYTY…VDFLKAHELG (243 aa)). Position 39 to 46 (39 to 46 (GHTGSGKS)) interacts with ATP. E170 serves as the catalytic Proton acceptor.

Belongs to the ABC transporter superfamily. Energy-coupling factor EcfA family. As to quaternary structure, forms a stable energy-coupling factor (ECF) transporter complex composed of 2 membrane-embedded substrate-binding proteins (S component), 2 ATP-binding proteins (A component) and 2 transmembrane proteins (T component). In L.lactis forms a stable complex with EcfA' and EcfT and substrate-binding components. In E.coli forms a stable complex with EcfA, EcfT and individually with 3 tested substrate-binding components (BioY, NiaX and ThiT) with a stoichiometry of 1.1:1:1. The core ECF complex interacts with a number of substrate-specific binding components, including BioY, BioY2, HmpT, NiaX, PanT, QueT, RibU and ThiT.

The protein localises to the cell membrane. Its function is as follows. ATP-binding (A) component of a common energy-coupling factor (ECF) ABC-transporter complex. Unlike classic ABC transporters this ECF transporter provides the energy necessary to transport a number of different substrates. In this organism these probably include biotin, thiamine precursor, niacin, pantothenic acid, queuosine precursor, riboflavin and thiamine. Uptake of niacin or riboflavin into proteosomes containing EcfA1A2T and Niax or RibU has been demonstrated. Uptake requires hydrolyzable Mg-ATP and is substrate-specific; NiaX-containing proteosomes did not transport riboflavin. The protein is Energy-coupling factor transporter ATP-binding protein EcfA2 of Lactococcus lactis subsp. cremoris (strain MG1363).